The primary structure comprises 229 residues: UPF0758 protein Ppro_3582 (229 aa).

Residues 1–20 form a disordered region; that stretch reads MCPGIREWPEDERPREKMLR. A compositionally biased stretch (basic and acidic residues) spans 7 to 19; sequence EWPEDERPREKML. The MPN domain occupies 107 to 229; that stretch reads RFTSPRQVFD…YLSFVERGVL (123 aa). 3 residues coordinate Zn(2+): histidine 178, histidine 180, and aspartate 191. Residues 178–191 carry the JAMM motif motif; the sequence is HNHPTGDPTPSQED.

Belongs to the UPF0758 family.

The chain is UPF0758 protein Ppro_3582 from Pelobacter propionicus (strain DSM 2379 / NBRC 103807 / OttBd1).